The following is a 684-amino-acid chain: Putative glucan endo-1,3-beta-glucosidase btgC (684 aa).

Over residues Met1–Tyr10 the composition is skewed to polar residues. Disordered stretches follow at residues Met1–Thr38, Ala124–Asp143, and Asp157–Ser182. At Met1–Arg302 the chain is on the cytoplasmic side. The segment covering Arg12–Glu32 has biased composition (basic and acidic residues). Residues Gly303 to Val323 traverse the membrane as a helical; Signal-anchor for type II membrane protein segment. The Extracellular segment spans residues Gly324–Thr684. The interval Gln330–Gly358 is disordered. Positions Thr336–Gly347 are enriched in low complexity. 4 N-linked (GlcNAc...) asparagine glycosylation sites follow: Asn404, Asn427, Asn455, and Asn474. The Proton donor role is filled by Glu487. Glu586 (nucleophile) is an active-site residue. Asn631 carries N-linked (GlcNAc...) asparagine glycosylation.

The protein belongs to the glycosyl hydrolase 17 family.

The protein localises to the cell membrane. It catalyses the reaction Hydrolysis of (1-&gt;3)-beta-D-glucosidic linkages in (1-&gt;3)-beta-D-glucans.. Functionally, glucanases play a role in cell expansion during growth, in cell-cell fusion during mating, and in spore release during sporulation. This enzyme may be involved in beta-glucan degradation. Active on laminarin and lichenan. This is Putative glucan endo-1,3-beta-glucosidase btgC (btgC) from Aspergillus niger (strain ATCC MYA-4892 / CBS 513.88 / FGSC A1513).